The sequence spans 361 residues: D-alanine--D-alanine ligase (361 aa).

The region spanning 134-344 (KLLLKSFNIP…FKDLIDNLID (211 aa)) is the ATP-grasp domain. 167 to 222 (KEVLGYPVIVKPAVLGSSIGINVAYSENQIESCIEEALKYDLTIVIEKFIEAREIE) is a binding site for ATP. Mg(2+) contacts are provided by Asp297, Glu311, and Asn313.

This sequence belongs to the D-alanine--D-alanine ligase family. Mg(2+) serves as cofactor. It depends on Mn(2+) as a cofactor.

Its subcellular location is the cytoplasm. It carries out the reaction 2 D-alanine + ATP = D-alanyl-D-alanine + ADP + phosphate + H(+). It functions in the pathway cell wall biogenesis; peptidoglycan biosynthesis. In terms of biological role, cell wall formation. The protein is D-alanine--D-alanine ligase of Borreliella afzelii (strain PKo) (Borrelia afzelii).